The chain runs to 556 residues: MAKYCLKKTSKRVSCAKRYKIEKKVRDHNRKVKKEAKKNGTTNKKEKTISVPNSCPFKEEILVQAEQEREKIKVRQEAAKEAAKIHRIEKRKNNLPANFESMVAKASKQGTEFDKKVASAAEHEKFNTLDDKTIKAYASEVRKTVEIADVIIQVLDARDPLGSRSKSVEDQVLKGGKRLVLLLNKIDLVPRENVQKWLEYLRGQFPTIAFKASTQEQKSNIGRFNSAILNNTETSKCVGADIVMKILANYCRNKDIKTSIRVGVVGFPNVGKSSVINSLKRRKACNVGNLPGITKEIQEVELDKNIRLIDSPGVILVSQKDLDPIEVALKNAIRVDNLLDPIAPVHAILRRCSKETIMLHYNLADFNSVDQFLAQLARRIGKLRRGARPDVNAAAKRVLNDWNTGKLRYYTHPPEQGTAKEDIVVPAEVVSQFSKEFDIDAIAEEQNQIVEGLPMESDIIAPHNSDEEEDDDDEMETDVNEKKQTVTSGRKVKGPTKDDDKPVLPESLALEGNVQLNKLIKTAIKKQKKKSKKTANRADKLSDSLGNMLGGDAMEM.

The interval 29-50 (NRKVKKEAKKNGTTNKKEKTIS) is disordered. Positions 58 to 95 (KEEILVQAEQEREKIKVRQEAAKEAAKIHRIEKRKNNL) form a coiled coil. In terms of domain architecture, CP-type G spans 138–317 (ASEVRKTVEI…LIDSPGVILV (180 aa)). Residues 184–187 (NKID), 266–273 (GFPNVGKS), and 310–313 (DSPG) contribute to the GTP site. 2 disordered regions span residues 461–508 (APHN…PESL) and 525–556 (KKQK…AMEM). The segment covering 466–478 (DEEEDDDDEMETD) has biased composition (acidic residues). Residues 525 to 535 (KKQKKKSKKTA) are compositionally biased toward basic residues.

Belongs to the TRAFAC class YlqF/YawG GTPase family.

Its subcellular location is the nucleus. Functionally, may play a role in regulating cellular proliferation in both germline and somatic tissues. In Caenorhabditis elegans, this protein is Guanine nucleotide-binding protein-like 3 homolog.